Here is a 103-residue protein sequence, read N- to C-terminus: Pyrimidine/purine nucleoside phosphorylase (103 aa).

It belongs to the nucleoside phosphorylase PpnP family.

It catalyses the reaction a purine D-ribonucleoside + phosphate = a purine nucleobase + alpha-D-ribose 1-phosphate. The catalysed reaction is adenosine + phosphate = alpha-D-ribose 1-phosphate + adenine. It carries out the reaction cytidine + phosphate = cytosine + alpha-D-ribose 1-phosphate. The enzyme catalyses guanosine + phosphate = alpha-D-ribose 1-phosphate + guanine. It catalyses the reaction inosine + phosphate = alpha-D-ribose 1-phosphate + hypoxanthine. The catalysed reaction is thymidine + phosphate = 2-deoxy-alpha-D-ribose 1-phosphate + thymine. It carries out the reaction uridine + phosphate = alpha-D-ribose 1-phosphate + uracil. The enzyme catalyses xanthosine + phosphate = alpha-D-ribose 1-phosphate + xanthine. Catalyzes the phosphorolysis of diverse nucleosides, yielding D-ribose 1-phosphate and the respective free bases. Can use uridine, adenosine, guanosine, cytidine, thymidine, inosine and xanthosine as substrates. Also catalyzes the reverse reactions. This is Pyrimidine/purine nucleoside phosphorylase from Citrifermentans bemidjiense (strain ATCC BAA-1014 / DSM 16622 / JCM 12645 / Bem) (Geobacter bemidjiensis).